A 235-amino-acid chain; its full sequence is MSSERQLAGRIVVPGEPLPEEVEASPPYVIDYKGVKRATVVGLLREKGDGGGRAFVKLKEIYVPQAGDVVIGLIQSVGIMNWFVDINSPYVAVLSVQDFLGRPFNPAVDDMQSLLKVGDYIKAKVVAFDKTRSPLLTVQGEGLGRIVRGKIVEISPAKVPRVIGRKMSMLKTLEEKTECKIFVARNGRIHLECPNEDLEAIAVMAIKIIDEEAYTSGLTKRIIKFIEEERRIREV.

The 73-residue stretch at 67 to 139 (GDVVIGLIQS…KTRSPLLTVQ (73 aa)) folds into the S1 motif domain. One can recognise a KH domain in the interval 149–205 (GKIVEISPAKVPRVIGRKMSMLKTLEEKTECKIFVARNGRIHLECPNEDLEAIAVMA).

This sequence belongs to the RRP4 family. In terms of assembly, component of the archaeal exosome complex. Forms a trimer of Rrp4 and/or Csl4 subunits. The trimer associates with a hexameric ring-like arrangement composed of 3 Rrp41-Rrp42 heterodimers.

The protein localises to the cytoplasm. Its function is as follows. Non-catalytic component of the exosome, which is a complex involved in RNA degradation. Increases the RNA binding and the efficiency of RNA degradation. Confers strong poly(A) specificity to the exosome. This chain is Exosome complex component Rrp4, found in Aeropyrum pernix (strain ATCC 700893 / DSM 11879 / JCM 9820 / NBRC 100138 / K1).